The primary structure comprises 637 residues: Threonine--tRNA ligase (637 aa).

Residues 1–61 (MPVITLPNGS…EQDAALSIVT (61 aa)) enclose the TGS domain. The tract at residues 242 to 533 (DHRKLGKKFD…LIENYEGAFP (292 aa)) is catalytic. Positions 333, 384, and 510 each coordinate Zn(2+).

The protein belongs to the class-II aminoacyl-tRNA synthetase family. As to quaternary structure, homodimer. It depends on Zn(2+) as a cofactor.

The protein localises to the cytoplasm. It carries out the reaction tRNA(Thr) + L-threonine + ATP = L-threonyl-tRNA(Thr) + AMP + diphosphate + H(+). Functionally, catalyzes the attachment of threonine to tRNA(Thr) in a two-step reaction: L-threonine is first activated by ATP to form Thr-AMP and then transferred to the acceptor end of tRNA(Thr). Also edits incorrectly charged L-seryl-tRNA(Thr). This is Threonine--tRNA ligase from Teredinibacter turnerae (strain ATCC 39867 / T7901).